A 443-amino-acid chain; its full sequence is Endoplasmic reticulum protein SC65 (443 aa).

The signal sequence occupies residues 1-18 (MARAAWGLLWLLLGSAGA). The interval 81 to 102 (SGPATSQPRPAPGPDGDNEGDG) is disordered. N-linked (GlcNAc...) asparagine glycosylation occurs at Asn367. Composition is skewed to acidic residues over residues 387-398 (DEMELEETESLP), 407-419 (AEFEGEGDYEEGL), and 431-443 (GDEDEAEPEPELA). The interval 387-443 (DEMELEETESLPEPEKPLSDAEFEGEGDYEEGLYADWWQEPDAKGDEDEAEPEPELA) is disordered.

It belongs to the leprecan family. As to quaternary structure, interacts with PLOD1, P3H3 and PPIB. Identified in a complex with PLOD1 and P3H3. In terms of tissue distribution, found in testis, brain, heart and at a much lower level in liver.

The protein resides in the endoplasmic reticulum. Part of a complex composed of PLOD1, P3H3 and P3H4 that catalyzes hydroxylation of lysine residues in collagen alpha chains and is required for normal assembly and cross-linking of collagen fibrils. Required for normal bone density and normal skin stability via its role in hydroxylation of lysine residues in collagen alpha chains and in collagen fibril assembly. The protein is Endoplasmic reticulum protein SC65 of Rattus norvegicus (Rat).